Reading from the N-terminus, the 2742-residue chain is Polycystin-1-like protein 1 (2742 aa).

Residues 1 to 1602 are Extracellular-facing; the sequence is MFCLWIFSLA…LDQFLSVSRD (1602 aa). 5 N-linked (GlcNAc...) asparagine glycosylation sites follow: Asn35, Asn133, Asn149, Asn220, and Asn267. PKD domains are found at residues 286 to 372 and 370 to 454; these read AVRI…VKLN and KLNR…PCQP. Asn383, Asn397, Asn486, Asn545, Asn693, Asn709, and Asn735 each carry an N-linked (GlcNAc...) asparagine glycan. The 887-residue stretch at 452 to 1338 folds into the REJ domain; it reads CQPPPVKNLG…ITFFLPASLI (887 aa). 2 disordered regions span residues 767-829 and 846-908; these read SPSR…QSDP and DLRG…RPSV. A compositionally biased stretch (polar residues) spans 779 to 799; it reads SELTDSPVSSVTVGFSGSESF. The span at 880–893 shows a compositional bias: low complexity; the sequence is SFPSDSDSFSHSSS. Residues Asn1080, Asn1101, Asn1201, Asn1318, Asn1437, Asn1490, and Asn1568 are each glycosylated (N-linked (GlcNAc...) asparagine). In terms of domain architecture, GAIN-B spans 1436–1587; the sequence is HNFSITQEHL…KVLQQQIQSS (152 aa). Intrachain disulfides connect Cys1541–Cys1569 and Cys1556–Cys1571. The tract at residues 1541-1587 is GPS; it reads CLSWEDQQGSWTQNGCRAQTNDKTSAVNCSCHHLKPLKVLQQQIQSS. The helical transmembrane segment at 1603–1623 threads the bilayer; sequence LTVVFVLLLCVSLNIPVLVWC. Residues 1624–1812 are Cytoplasmic-facing; the sequence is KKTDATSEEN…SPHLFTRAQR (189 aa). The PLAT domain occupies 1648 to 1769; the sequence is HFYAVTVHTG…GDGQVERMLR (122 aa). The chain crosses the membrane as a helical span at residues 1813–1833; the sequence is LCVCLLLFLGYACVNIIITHQ. At 1834–1851 the chain is on the extracellular side; sequence RDDQLPFDLGVIDVTSVS. A helical membrane pass occupies residues 1852-1872; that stretch reads IATGLVSVVAVLPVAMVISFL. Residues 1873-2005 are Cytoplasmic-facing; that stretch reads FRVKSGRMTL…YRLASLLYHC (133 aa). Residues 2006–2026 traverse the membrane as a helical segment; sequence VAWTLCLLFCLSCLILSAVLG. At 2027 to 2040 the chain is on the extracellular side; sequence TRLNSGKILHWIHS. Residues 2041–2061 form a helical membrane-spanning segment; that stretch reads LFVSLTFCFFVIHPATILVLA. Residues 2062 to 2151 lie on the Cytoplasmic side of the membrane; sequence AVVSWRFKRS…KQAVIHKMLR (90 aa). Residues 2152–2172 form a helical membrane-spanning segment; the sequence is DLCLCGSMFFLMVCITYGSPV. At 2173–2344 the chain is on the extracellular side; sequence DEHYPLNAAF…QSVRLYHSPS (172 aa). N-linked (GlcNAc...) asparagine glycosylation is present at Asn2218. Residues 2345–2365 traverse the membrane as a helical segment; it reads MLDYTVMVWQLLFLLLSLVNL. Over 2366 to 2378 the chain is Cytoplasmic; sequence YHQTSTAAQHGLM. A helical membrane pass occupies residues 2379–2401; sequence GYWKTTSISVEVSLVIVSLVYYV. Residues 2402-2442 are Extracellular-facing; sequence HYVYHPTMVMEVAEQLRRNHREHVDVSTLANSEQFSRTLRG. The helical transmembrane segment at 2443 to 2463 threads the bilayer; the sequence is IILFLLAVKCVTVVRLNRILA. The Cytoplasmic segment spans residues 2464-2467; that stretch reads PSMP. A helical membrane pass occupies residues 2468–2488; that stretch reads LLSLSSLLWPAISGLLLLSIF. Residues 2489 to 2528 lie on the Extracellular side of the membrane; that stretch reads SCMGRLLYIERTFHSIQTVLWHFWSLRKSRDLISLWRDFY. The helical transmembrane segment at 2529–2549 threads the bilayer; the sequence is YFGLLYASSAMLTTMVFAVMI. Topologically, residues 2550 to 2742 are cytoplasmic; that stretch reads RKAKRSPSTK…LVHHEQGTKN (193 aa).

The protein belongs to the polycystin family. In terms of assembly, heterodimer. Interacts with pkd2 to form a calcium channel. Interacts with pkd2l1 to form ciliary calcium channel. As to expression, expressed in Kupffer's vesicle, an organ equivalent to the node.

The protein localises to the cell projection. It is found in the cilium membrane. Functionally, component of a calcium-permeant ion channel formed by PKD1L2 and PKD1L1 in primary cilia, where it controls cilium calcium concentration, without affecting cytoplasmic calcium concentration, and regulates sonic hedgehog/SHH signaling and GLI2 transcription. The PKD1L1:PKD2L1 channel complex is mechanosensitive only at high pressures and is highly temperature sensitive. Also involved in left/right axis specification downstream of nodal flow by forming a complex with PKD2 in cilia to facilitate flow detection in left/right patterning. In Oryzias latipes (Japanese rice fish), this protein is Polycystin-1-like protein 1.